A 187-amino-acid polypeptide reads, in one-letter code: Accessory gene regulator protein B (187 aa).

5 helical membrane passes run 49 to 69, 82 to 102, 107 to 127, 143 to 163, and 164 to 184; these read IAYILNIFIFTLITNISFYLI, FWCYIESITLFIVLPLLVLHF, TLMMFLALISVGVVIKYAPAA, YFSIIISTILFIITLFVKEPY, and TQFIQLGIIIQAITLLPIYYS.

It belongs to the AgrB family.

The protein localises to the cell membrane. Functionally, essential for the production of a quorum sensing system signal molecule, the autoinducing peptide (AIP). This quorum sensing system is responsible for the regulation of the expression of virulence factor genes. Involved in the proteolytic processing of AgrD, the precursor of AIP. The polypeptide is Accessory gene regulator protein B (Staphylococcus aureus (strain MW2)).